We begin with the raw amino-acid sequence, 159 residues long: Ribosomal RNA large subunit methyltransferase H (159 aa).

Residues leucine 76, glycine 108, and 127 to 132 (FSKMTF) each bind S-adenosyl-L-methionine.

Belongs to the RNA methyltransferase RlmH family. As to quaternary structure, homodimer.

The protein resides in the cytoplasm. The enzyme catalyses pseudouridine(1915) in 23S rRNA + S-adenosyl-L-methionine = N(3)-methylpseudouridine(1915) in 23S rRNA + S-adenosyl-L-homocysteine + H(+). In terms of biological role, specifically methylates the pseudouridine at position 1915 (m3Psi1915) in 23S rRNA. In Clostridium kluyveri (strain NBRC 12016), this protein is Ribosomal RNA large subunit methyltransferase H.